A 374-amino-acid polypeptide reads, in one-letter code: Homeobox protein knotted-1-like 13 (374 aa).

The segment at 214–242 is disordered; that stretch reads TGASPGEGTGATMSDGEDDQADSEANMYD. The region spanning 270–290 is the ELK domain; that stretch reads ELKHELKQGYKEKLIDIREEI. The homeobox; TALE-type DNA-binding region spans 291–354; that stretch reads LRKRRAGKLP…NQRKRNWHSN (64 aa). The interval 347–374 is disordered; sequence RKRNWHSNPSSSTSVKTKRKSNAGDNNS.

It belongs to the TALE/KNOX homeobox family. As to expression, isoforms 1 and 2 are expressed in roots, stems, shoot meristem, leaf blades, leaf sheaths and flowers. Isoform 3 is expressed in stems, shoot meristem, rachis, leaf blades and leaf sheaths.

It is found in the nucleus. Functionally, isoform 3 acts as a transcription activator, but isoforms 1 and 2 do not. In Oryza sativa subsp. japonica (Rice), this protein is Homeobox protein knotted-1-like 13 (OSH45).